We begin with the raw amino-acid sequence, 147 residues long: Plasminogen receptor (KT) (147 aa).

The Extracellular portion of the chain corresponds to 1 to 52; the sequence is MGFIFSKSMNESMKNQKEFMLMNARLQLERQLIMQSEMRERQMAMQIAWSRE. The chain crosses the membrane as a helical span at residues 53 to 73; it reads FLKYFGTFFGLAAISLTAGAI. Topologically, residues 74 to 78 are cytoplasmic; the sequence is KKKKP. The chain crosses the membrane as a helical span at residues 79-99; that stretch reads AFLVPIVPLSFILTYQYDLGY. The Extracellular portion of the chain corresponds to 100 to 147; sequence GTLLERMKGEAEDILETEKSKLQLPRGMITFESIEKARKEQSRFFIDK.

Interacts with PLAT and PLAUR. In terms of tissue distribution, expressed in peripheral blood cells and monocytes. Expressed in adrenal medulla.

Its subcellular location is the cell membrane. Receptor for plasminogen. Regulates urokinase plasminogen activator-dependent and stimulates tissue-type plasminogen activator-dependent cell surface plasminogen activation. Proposed to be part of a local catecholaminergic cell plasminogen activation system that regulates neuroendocrine prohormone processing. Involved in regulation of inflammatory response; regulates monocyte chemotactic migration and matrix metalloproteinase activation, such as of MMP2 and MMP9. The chain is Plasminogen receptor (KT) (PLGRKT) from Homo sapiens (Human).